Reading from the N-terminus, the 851-residue chain is UPF0182 protein CYA_1810 (851 aa).

7 consecutive transmembrane segments (helical) span residues 7–27 (GLVLLLWAGLGILAITALASF), 47–67 (VLARWGLGLGAFAFALAVVGS), 76–96 (ASTAGAWAIALGLSGGLAWSL), 141–161 (FNLVLLTLITVALIYLVELGL), 168–188 (LALSLFAQRHLLILGGALFLL), 220–240 (LPATTLMSGVAFLTAVGFWAL), and 259–279 (WASSLLAPALLWGAYLGFGLL).

The protein belongs to the UPF0182 family.

Its subcellular location is the cell membrane. The polypeptide is UPF0182 protein CYA_1810 (Synechococcus sp. (strain JA-3-3Ab) (Cyanobacteria bacterium Yellowstone A-Prime)).